Here is a 304-residue protein sequence, read N- to C-terminus: Putative S-adenosyl-L-methionine-dependent methyltransferase MAV_4236 (304 aa).

Residues Asp-129 and 158 to 159 each bind S-adenosyl-L-methionine; that span reads DL.

It belongs to the UPF0677 family.

Its function is as follows. Exhibits S-adenosyl-L-methionine-dependent methyltransferase activity. The sequence is that of Putative S-adenosyl-L-methionine-dependent methyltransferase MAV_4236 from Mycobacterium avium (strain 104).